A 645-amino-acid chain; its full sequence is Pro-neuregulin-1, membrane-bound isoform (645 aa).

The propeptide occupies 1-19; that stretch reads MSERKEGRGKGKGKKKDRG. Residues 1-52 are disordered; it reads MSERKEGRGKGKGKKKDRGSRGKPAPAEGDPSPALPPRLKEMKSQESAAGSK. At 20-247 the chain is on the extracellular side; the sequence is SRGKPAPAEG…MEAEELYQKR (228 aa). In terms of domain architecture, Ig-like C2-type spans 37–128; that stretch reads PRLKEMKSQE…GNDSASANIT (92 aa). Cys57 and Cys112 are oxidised to a cystine. Polar residues predominate over residues 139-164; sequence MSASTERPYVSSESPIRISVSTEGAN. Residues 139 to 175 form a disordered region; sequence MSASTERPYVSSESPIRISVSTEGANTSSSTSTSTTG. Low complexity predominate over residues 165 to 175; it reads TSSSTSTSTTG. Residues 178–222 enclose the EGF-like domain; that stretch reads HLIKCAEKEKTFCVNGGECFMVKDLSNPSRYLCKCPNEFTGDRCQ. 3 cysteine pairs are disulfide-bonded: Cys182–Cys196, Cys190–Cys210, and Cys212–Cys221. Residues 248–268 traverse the membrane as a helical segment; it reads VLTITGICIALLVVGIMCVVA. The Cytoplasmic segment spans residues 269–645; it reads YCKTKKQRQK…VIANQDPIAV (377 aa). Over residues 340–355 the composition is skewed to low complexity; sequence SHYTSTAHHSTTVTQT. Disordered regions lie at residues 340–364, 380–406, 433–463, and 531–593; these read SHYTSTAHHSTTVTQTPSHSWSNGH, SVENSRHSSPAGGPRGRLHGLGGPREC, MTTPARMSPVDFHTPSSPKSPPSEMSPPVSS, and ETTQ…DTPF. Positions 392-402 are enriched in gly residues; that stretch reads GPRGRLHGLGG. Residues 547–557 are compositionally biased toward basic residues; it reads TNSRRAKRTKP. The span at 568 to 579 shows a compositional bias: low complexity; sequence DSNPSSVSSNSE.

This sequence belongs to the neuregulin family. As to quaternary structure, the cytoplasmic domain interacts with the LIM domain region of LIMK1. Forms a ternary complex with ERBB3 and ITGAV:ITGB3 or ITGA6:ITGB4. Interacts with NRDC and BACE1. Post-translationally, proteolytic cleavage close to the plasma membrane on the external face leads to the release of the soluble growth factor form. N- and O-glycosylated. Extensive glycosylation precedes the proteolytic cleavage.

Its subcellular location is the cell membrane. The protein resides in the secreted. Functionally, direct ligand for ERBB3 and ERBB4 tyrosine kinase receptors. Concomitantly recruits ERBB1 and ERBB2 coreceptors, resulting in ligand-stimulated tyrosine phosphorylation and activation of the ERBB receptors. Perform diverse functions such as inducing growth and differentiation of epithelial, glial, neuronal, and skeletal muscle cells; inducing expression of acetylcholine receptor in synaptic vesicles during the formation of the neuromuscular junction; stimulating lobuloalveolar budding and milk production in the mammary gland and inducing differentiation of mammary tumor cells; stimulating Schwann cell proliferation; implication in the development of the myocardium such as trabeculation of the developing heart. Binds to ERBB4 and ERBB3. Acts as a ligand for integrins and binds (via EGF domain) to integrins ITGAV:ITGB3 or ITGA6:ITGB4. Its binding to integrins and subsequent ternary complex formation with integrins and ERRB3 are essential for NRG1-ERBB signaling. Induces the phosphorylation and activation of MAPK3/ERK1, MAPK1/ERK2 and AKT1, and ligand-dependent ERBB4 endocytosis is essential for the NRG1-mediated activation of these kinases in neurons. The polypeptide is Pro-neuregulin-1, membrane-bound isoform (Mus musculus (Mouse)).